A 330-amino-acid polypeptide reads, in one-letter code: Cyclin-dependent kinase 7 (330 aa).

The Protein kinase domain maps to 5–289 (YDTIKHLGEG…CTQSLQMEYF (285 aa)). ATP is bound by residues 11–19 (LGEGQFANV) and Lys34. Asp130 (proton acceptor) is an active-site residue. Thr163 carries the post-translational modification Phosphothreonine. The disordered stretch occupies residues 305–330 (KKQQPQKRSRRLDDDGTRPVRRLNFD). A compositionally biased stretch (basic and acidic residues) spans 315–330 (RLDDDGTRPVRRLNFD).

This sequence belongs to the protein kinase superfamily. CMGC Ser/Thr protein kinase family. CDC2/CDKX subfamily. As to quaternary structure, catalytic component which, in association with cyclin H (cyh-1) and mat1, is likely to form the CAK complex.

It carries out the reaction L-seryl-[protein] + ATP = O-phospho-L-seryl-[protein] + ADP + H(+). It catalyses the reaction L-threonyl-[protein] + ATP = O-phospho-L-threonyl-[protein] + ADP + H(+). The catalysed reaction is [DNA-directed RNA polymerase] + ATP = phospho-[DNA-directed RNA polymerase] + ADP + H(+). Functionally, serine/threonine kinase involved in cell cycle control and in RNA polymerase II-mediated RNA transcription. Required for maintaining chromosome ploidy. May phosphorylate the large subunit of RNA polymerase II, ama-1. The protein is Cyclin-dependent kinase 7 of Caenorhabditis elegans.